Here is a 110-residue protein sequence, read N- to C-terminus: UPF0122 protein LMOf2365_1829 (110 aa).

The protein belongs to the UPF0122 family.

Functionally, might take part in the signal recognition particle (SRP) pathway. This is inferred from the conservation of its genetic proximity to ftsY/ffh. May be a regulatory protein. This Listeria monocytogenes serotype 4b (strain F2365) protein is UPF0122 protein LMOf2365_1829.